The sequence spans 312 residues: Light-independent protochlorophyllide reductase iron-sulfur ATP-binding protein (312 aa).

ATP contacts are provided by residues G55–T60 and K84. Residue S59 coordinates Mg(2+). Positions 140 and 174 each coordinate [4Fe-4S] cluster. ATP is bound by residues N225–R226 and P249–L251.

It belongs to the NifH/BchL/ChlL family. As to quaternary structure, homodimer. Protochlorophyllide reductase is composed of three subunits; BchL, BchN and BchB. [4Fe-4S] cluster serves as cofactor.

The enzyme catalyses chlorophyllide a + oxidized 2[4Fe-4S]-[ferredoxin] + 2 ADP + 2 phosphate = protochlorophyllide a + reduced 2[4Fe-4S]-[ferredoxin] + 2 ATP + 2 H2O. Its pathway is porphyrin-containing compound metabolism; bacteriochlorophyll biosynthesis (light-independent). Its function is as follows. Component of the dark-operative protochlorophyllide reductase (DPOR) that uses Mg-ATP and reduced ferredoxin to reduce ring D of protochlorophyllide (Pchlide) to form chlorophyllide a (Chlide). This reaction is light-independent. The L component serves as a unique electron donor to the NB-component of the complex, and binds Mg-ATP. This is Light-independent protochlorophyllide reductase iron-sulfur ATP-binding protein from Rhodopseudomonas palustris (strain BisB18).